A 119-amino-acid polypeptide reads, in one-letter code: Autophagy-related protein 8c (119 aa).

Gly117 carries the Phosphatidylethanolamine amidated glycine lipid modification. A propeptide spans 118-119 (LV) (removed in mature form).

This sequence belongs to the ATG8 family. In terms of assembly, interacts with ATG4. Interacts with NBR1. In terms of processing, the C-terminal 2 residues are removed by ATG4 to expose Gly-117 at the C-terminus. This Gly-117 forms then a thioester bond with the 'Cys-558' of ATG7 (E1-like activating enzyme) before being transferred to the 'Cys-258' of ATG3 (the specific E2 conjugating enzyme), in order to be finally amidated with phosphatidylethanolamine. This lipid modification anchors ATG8 to autophagosomes. In terms of tissue distribution, constitutively expressed.

It localises to the cytoplasmic vesicle. It is found in the autophagosome membrane. The protein resides in the vacuole membrane. The protein localises to the cytoplasm. Its subcellular location is the cytoskeleton. In terms of biological role, ubiquitin-like modifier involved in autophagosomes formation. May mediate the delivery of the autophagosomes to the vacuole via the microtubule cytoskeleton. The polypeptide is Autophagy-related protein 8c (ATG8C) (Arabidopsis thaliana (Mouse-ear cress)).